The sequence spans 197 residues: Ribonuclease HII (197 aa).

Residues 11 to 197 enclose the RNase H type-2 domain; it reads HLIAGVDEVG…FAPVKKILGL (187 aa). A divalent metal cation contacts are provided by D17, E18, and D109.

It belongs to the RNase HII family. Requires Mn(2+) as cofactor. Mg(2+) serves as cofactor.

It localises to the cytoplasm. The enzyme catalyses Endonucleolytic cleavage to 5'-phosphomonoester.. Endonuclease that specifically degrades the RNA of RNA-DNA hybrids. This Actinobacillus pleuropneumoniae serotype 5b (strain L20) protein is Ribonuclease HII.